The sequence spans 435 residues: Trigger factor (435 aa).

A PPIase FKBP-type domain is found at 183 to 263 (GDFINVDVTI…VKTIWQGNMP (81 aa)).

The protein belongs to the FKBP-type PPIase family. Tig subfamily.

It localises to the cytoplasm. It carries out the reaction [protein]-peptidylproline (omega=180) = [protein]-peptidylproline (omega=0). Functionally, involved in protein export. Acts as a chaperone by maintaining the newly synthesized protein in an open conformation. Functions as a peptidyl-prolyl cis-trans isomerase. The chain is Trigger factor from Protochlamydia amoebophila (strain UWE25).